Consider the following 80-residue polypeptide: Penaeidin-3 (80 aa).

Residues 1–19 (MRLVVCLVYLVSFALVCQG) form the signal peptide. Residue Gln-20 is modified to Pyrrolidone carboxylic acid. 3 disulfide bridges follow: Cys-54–Cys-67, Cys-57–Cys-74, and Cys-68–Cys-75.

Belongs to the penaeidin family. In terms of processing, the N-terminus forms pyrrolidone carboxylic acid. As to expression, strongly expressed in hemocytes, and to a lesser extent in heart, muscle, gills, intestine and eyestalk. Lowest expression in hepatopancreas.

The protein localises to the cytoplasmic granule. Its function is as follows. Antibacterial and antifungal activity. Presents chitin-binding activity. This is Penaeidin-3 from Penaeus indicus (Indian white prawn).